The following is a 1001-amino-acid chain: Receptor-type tyrosine-protein phosphatase N2 (1001 aa).

The first 27 residues, 1-27 (MGPPLPLLLLLLLPPPLPRALPAPASA), serve as a signal peptide directing secretion. Residues 1–407 (MGPPLPLLLL…PEGPLLEKSS (407 aa)) are involved in localization to secretory granules; interaction with CPE. The Extracellular portion of the chain corresponds to 28 to 600 (RGRQLPGRLG…HQEEQEDSTK (573 aa)). R259 carries the post-translational modification Omega-N-methylarginine. 3 disordered regions span residues 271–296 (PFSATALSQRWPPPPGDAKDSPSMDD), 308–359 (QQNS…DAPE), and 394–459 (SPLL…LEDQ). Residues 312–325 (EVDRLGPLKEEKAD) show a composition bias toward basic and acidic residues. Position 339 is a phosphoserine (S339). Over residues 340–355 (QESHGRGAEGQPREQT) the composition is skewed to basic and acidic residues. The span at 394 to 404 (SPLLPEGPLLE) shows a compositional bias: low complexity. Positions 405-416 (KSSREEIKKSEQ) are enriched in basic and acidic residues. Acidic residues predominate over residues 417–428 (PEEVLSSEEETA). Phosphoserine occurs at positions 422 and 423. The segment covering 429–459 (GVEHVRSRTYSKDLFERKPNSEPQPRRLEDQ) has biased composition (basic and acidic residues). N550 carries an N-linked (GlcNAc...) asparagine glycan. The chain crosses the membrane as a helical span at residues 601-621 (FILLTFLSIACILGVLLASSL). The Cytoplasmic segment spans residues 622–1001 (AYCLRHNSHY…VNAILKALPQ (380 aa)). The Tyrosine-based internalization motif motif lies at 652 to 661 (YQELCRQRMA). Positions 663 to 705 (RPQDRSEGPHTSRINSVSSQFSDGPMPSPSARSSTSSWSEEPV) are disordered. Residues 674–684 (SRINSVSSQFS) show a composition bias toward polar residues. Phosphoserine occurs at positions 678 and 684. Residues 691 to 705 (PSARSSTSSWSEEPV) are compositionally biased toward low complexity. Position 697 is a phosphothreonine (T697). A Tyrosine-protein phosphatase domain is found at 731–991 (LEKEWEALCA…EFALTAVAEE (261 aa)). Residues D899 and 931-937 (CSDGAGR) each bind substrate. The active-site Phosphocysteine intermediate is the C931. Residue K956 is modified to N6-acetyllysine. Residue Q976 coordinates substrate. The Leucine-based sorting signal motif lies at 990–996 (EEVNAIL).

It belongs to the protein-tyrosine phosphatase family. In terms of assembly, self-associates. Interacts (via cytoplasmic domain) with PTPRN (via cytoplasmic domain). Interacts (precursor form) with CPE. Interacts with HAP1 isoform A. Interacts with AP2A1 or AP2A2 and AP1G1; indicative for an association with adaptor protein complex 2 (AP-2) and adaptor protein complex 1 (AP-1). Interacts with AP2M1; indicative for an association with adaptor protein complex 2 (AP-2). Interacts with MYO5A. Post-translationally, subject to proteolytic cleavage at multiple sites during maturation of secretory granules. In the brain at least IA-2beta71, IA-2beta64 and IA-2beta60 have been detected, in the pancreas and a pancreatic beta cell line only IA-2beta60 has been detected. Detected in brain. Detected in pancreas islets (at protein level). Detected in pancreas and brain.

It is found in the cytoplasmic vesicle. The protein localises to the secretory vesicle membrane. The protein resides in the secretory vesicle. It localises to the synaptic vesicle membrane. The enzyme catalyses O-phospho-L-tyrosyl-[protein] + H2O = L-tyrosyl-[protein] + phosphate. In terms of biological role, plays a role in vesicle-mediated secretory processes. Required for normal accumulation of secretory vesicles in hippocampus, pituitary and pancreatic islets. Required for the accumulation of normal levels of insulin-containing vesicles and preventing their degradation. Plays a role in insulin secretion in response to glucose stimuli. Required for normal accumulation of the neurotransmitters norepinephrine, dopamine and serotonin in the brain. In females, but not in males, required for normal accumulation and secretion of pituitary hormones, such as luteinizing hormone (LH) and follicle-stimulating hormone (FSH). Required to maintain normal levels of renin expression and renin release. May regulate catalytic active protein-tyrosine phosphatases such as PTPRA through dimerization. Has phosphatidylinositol phosphatase activity; the PIPase activity is involved in its ability to regulate insulin secretion. Can dephosphorylate phosphatidylinositol 4,5-biphosphate (PI(4,5)P2), phosphatidylinositol 5-phosphate and phosphatidylinositol 3-phosphate. Regulates PI(4,5)P2 level in the plasma membrane and localization of cofilin at the plasma membrane and thus is indirectly involved in regulation of actin dynamics related to cell migration and metastasis; upon hydrolysis of PI(4,5)P2 cofilin is released from the plasma membrane and acts in the cytoplasm in severing F-actin filaments. The polypeptide is Receptor-type tyrosine-protein phosphatase N2 (Ptprn2) (Mus musculus (Mouse)).